The following is a 445-amino-acid chain: N-succinylarginine dihydrolase (445 aa).

Substrate is bound by residues 19–28, Asn110, and 137–138; these read AGLSFGNVAS and HR. Residue Glu174 is part of the active site. Arg214 contacts substrate. The active site involves His250. 2 residues coordinate substrate: Asp252 and Asn363. Cys369 acts as the Nucleophile in catalysis.

Belongs to the succinylarginine dihydrolase family. Homodimer.

The enzyme catalyses N(2)-succinyl-L-arginine + 2 H2O + 2 H(+) = N(2)-succinyl-L-ornithine + 2 NH4(+) + CO2. The protein operates within amino-acid degradation; L-arginine degradation via AST pathway; L-glutamate and succinate from L-arginine: step 2/5. Its function is as follows. Catalyzes the hydrolysis of N(2)-succinylarginine into N(2)-succinylornithine, ammonia and CO(2). The sequence is that of N-succinylarginine dihydrolase from Shewanella sediminis (strain HAW-EB3).